The sequence spans 222 residues: Thiamine-phosphate synthase (222 aa).

4-amino-2-methyl-5-(diphosphooxymethyl)pyrimidine-binding positions include glutamine 40–lysine 44 and asparagine 81. The Mg(2+) site is built by aspartate 82 and aspartate 101. A 4-amino-2-methyl-5-(diphosphooxymethyl)pyrimidine-binding site is contributed by serine 120. Threonine 146–threonine 148 is a 2-[(2R,5Z)-2-carboxy-4-methylthiazol-5(2H)-ylidene]ethyl phosphate binding site. Lysine 149 contacts 4-amino-2-methyl-5-(diphosphooxymethyl)pyrimidine. 2-[(2R,5Z)-2-carboxy-4-methylthiazol-5(2H)-ylidene]ethyl phosphate is bound at residue glycine 178.

This sequence belongs to the thiamine-phosphate synthase family. Mg(2+) is required as a cofactor.

It catalyses the reaction 2-[(2R,5Z)-2-carboxy-4-methylthiazol-5(2H)-ylidene]ethyl phosphate + 4-amino-2-methyl-5-(diphosphooxymethyl)pyrimidine + 2 H(+) = thiamine phosphate + CO2 + diphosphate. The catalysed reaction is 2-(2-carboxy-4-methylthiazol-5-yl)ethyl phosphate + 4-amino-2-methyl-5-(diphosphooxymethyl)pyrimidine + 2 H(+) = thiamine phosphate + CO2 + diphosphate. The enzyme catalyses 4-methyl-5-(2-phosphooxyethyl)-thiazole + 4-amino-2-methyl-5-(diphosphooxymethyl)pyrimidine + H(+) = thiamine phosphate + diphosphate. Its pathway is cofactor biosynthesis; thiamine diphosphate biosynthesis; thiamine phosphate from 4-amino-2-methyl-5-diphosphomethylpyrimidine and 4-methyl-5-(2-phosphoethyl)-thiazole: step 1/1. Condenses 4-methyl-5-(beta-hydroxyethyl)thiazole monophosphate (THZ-P) and 2-methyl-4-amino-5-hydroxymethyl pyrimidine pyrophosphate (HMP-PP) to form thiamine monophosphate (TMP). The sequence is that of Thiamine-phosphate synthase from Mycobacterium tuberculosis (strain ATCC 25177 / H37Ra).